Consider the following 328-residue polypeptide: Spermatogenesis- and oogenesis-specific basic helix-loop-helix-containing protein 1 (328 aa).

The bHLH domain occupies 53–104 (SCLRRNVISERERRKRMSLSCERLRALLPQFDGRREDMASVLEMSVQFLRLA). Residues 290 to 328 (EAGSALGSDVDDGTSFLLTAGPSSWPGEWGPGFRAGPPA) are disordered. The span at 310–321 (GPSSWPGEWGPG) shows a compositional bias: low complexity.

In terms of assembly, forms both hetero- and homodimers with SOHLH2.

It is found in the cytoplasm. It localises to the nucleus. In terms of biological role, transcription regulator of both male and female germline differentiation. Suppresses genes involved in spermatogonial stem cells maintenance, and induces genes important for spermatogonial differentiation. Coordinates oocyte differentiation without affecting meiosis I. In Homo sapiens (Human), this protein is Spermatogenesis- and oogenesis-specific basic helix-loop-helix-containing protein 1 (SOHLH1).